The chain runs to 827 residues: ADP-ribosylation factor GTPase-activating protein AGD3 (827 aa).

The region spanning 1–225 is the BAR domain; sequence MHFTKLDDSP…INQVLTYAQQ (225 aa). 2 coiled-coil regions span residues 116–139 and 223–253; these read HEVKEARKRFDKASLTYDQAREKF and AQQSRERSNYEQAALNEKMQEYKRQVDRESR. The tract at residues 246–269 is disordered; it reads RQVDRESRWGSNGSNGSPNGDGIQ. Residues 255–267 show a composition bias toward low complexity; the sequence is GSNGSNGSPNGDG. The PH domain maps to 292-430; the sequence is QTIRQGYLSK…WIEKITGVIA (139 aa). The segment at 439–467 is disordered; the sequence is EQRLPGSPMGSGHHRSASESSSYESSEYD. A Phosphoserine modification is found at S445. One can recognise an Arf-GAP domain in the interval 501-643; that stretch reads EKPIDALRKV…LFVRRSRDSD (143 aa). Residues 516–539 form a C4-type zinc finger; the sequence is CADCGAPEPDWASLNLGVLVCIEC. ANK repeat units lie at residues 728 to 757, 761 to 790, and 794 to 825; these read GGSSLLHCACEKADLGMVELLLQYGANVNA, SGQTPLHCCLLRGKVTIARLLLTRGADPEA, and EGKTALDIAAESNFTDPEVLALLSDTNGYNHR.

Homodimer. Interacts with DRP1A. Interacts with VAB. As to expression, broadly expressed. Detected in developing veins of the leaf and root. Detected in roots, hypocotyls, cotyledons, leaves, siliques and shoot apical meristems.

The protein resides in the golgi apparatus. It is found in the trans-Golgi network. ARF GAP activity strongly enhanced by phosphatidylinositol 4-monophosphate (PIP) and moderately enhanced by phosphatidylinositol 4,5-bisphosphate (PIP2). In terms of biological role, GTPase-activating protein (GAP) for ADP ribosylation factor (ARF). Involved in the spatial control of provascular differentiation. Required for the formation of the normal pattern of continuous secondary veins. Involved in auxin signaling but not in polar auxin transport or in auxin responses. Required for PIN1 internalization in roots. The sequence is that of ADP-ribosylation factor GTPase-activating protein AGD3 (AGD3) from Arabidopsis thaliana (Mouse-ear cress).